A 284-amino-acid polypeptide reads, in one-letter code: MKLCDFEVGLDQPFFLIAGTCVVESEQMTIDTAGRLKEICEKLNVPFIYKSSYDKANRSSGKSFRGLGMDEGLRILSEVKRQLGLPVLTDVHSIDEIEQVASVVDVLQTPAFLCRQTDFIHACARSGKPVNIKKGQFLAPHDMKNVIDKARDAAREAGLSEDRFMACERGVSFGYNNLVSDMRSLAIMRETNAPVVFDATHSVQLPGGQGTSSGGQREFVPVLARAAVATGVAGLFMETHPNPAEAKSDGPNAVPLNRMGALLETLVTLDQAVKRNPFLENDFN.

Belongs to the KdsA family.

The protein localises to the cytoplasm. It catalyses the reaction D-arabinose 5-phosphate + phosphoenolpyruvate + H2O = 3-deoxy-alpha-D-manno-2-octulosonate-8-phosphate + phosphate. The protein operates within carbohydrate biosynthesis; 3-deoxy-D-manno-octulosonate biosynthesis; 3-deoxy-D-manno-octulosonate from D-ribulose 5-phosphate: step 2/3. It functions in the pathway bacterial outer membrane biogenesis; lipopolysaccharide biosynthesis. The chain is 2-dehydro-3-deoxyphosphooctonate aldolase from Burkholderia cenocepacia (strain ATCC BAA-245 / DSM 16553 / LMG 16656 / NCTC 13227 / J2315 / CF5610) (Burkholderia cepacia (strain J2315)).